Here is a 257-residue protein sequence, read N- to C-terminus: Ribonuclease HII (257 aa).

Residues 71–257 (ELIAGIDEVG…EPIKSMVNFK (187 aa)) form the RNase H type-2 domain. Positions 77, 78, and 169 each coordinate a divalent metal cation.

The protein belongs to the RNase HII family. Mn(2+) is required as a cofactor. Requires Mg(2+) as cofactor.

It localises to the cytoplasm. The catalysed reaction is Endonucleolytic cleavage to 5'-phosphomonoester.. Endonuclease that specifically degrades the RNA of RNA-DNA hybrids. This chain is Ribonuclease HII (rnhB), found in Lactococcus lactis subsp. cremoris (strain MG1363).